The sequence spans 259 residues: Isoepoxydon dehydrogenase patN (259 aa).

3 residues coordinate NADP(+): aspartate 69, asparagine 96, and lysine 125. Residues serine 143 and serine 144 each act as proton donor in the active site. The NADP(+) site is built by tyrosine 158, lysine 162, and valine 191. The Proton acceptor role is filled by tyrosine 158. The active-site Lowers pKa of active site Tyr is lysine 162.

This sequence belongs to the short-chain dehydrogenases/reductases (SDR) family.

Its subcellular location is the cytoplasm. It localises to the cytosol. The catalysed reaction is isoepoxydon + NADP(+) = phyllostine + NADPH + H(+). The protein operates within mycotoxin biosynthesis; patulin biosynthesis. In terms of biological role, isoepoxydon dehydrogenase; part of the gene cluster that mediates the biosynthesis of patulin, an acetate-derived tetraketide mycotoxin produced by several fungal species that shows antimicrobial properties against several bacteria. PatN catalyzes the conversion of isoepoxydon into phyllostine. The pathway begins with the synthesis of 6-methylsalicylic acid by the polyketide synthase (PKS) patK via condensation of acetate and malonate units. The 6-methylsalicylic acid decarboxylase patG then catalyzes the decarboxylation of 6-methylsalicylic acid to yield m-cresol (also known as 3-methylphenol). These first reactions occur in the cytosol. The intermediate m-cresol is then transported into the endoplasmic reticulum where the cytochrome P450 monooxygenase patH converts it to m-hydroxybenzyl alcohol, which is further converted to gentisyl alcohol by the cytochrome P450 monooxygenase patI. The oxidoreductases patJ and patO further convert gentisyl alcohol to isoepoxydon in the vacuole. PatN catalyzes then the transformation of isoepoxydon into phyllostine. The cluster protein patF is responsible for the conversion from phyllostine to neopatulin whereas the alcohol dehydrogenase patD converts neopatulin to E-ascladiol. The steps between isoepoxydon and E-ascladiol occur in the cytosol, and E-ascladiol is probably secreted to the extracellular space by one of the cluster-specific transporters patC or patM. Finally, the secreted patulin synthase patE catalyzes the conversion of E-ascladiol to patulin. In Penicillium expansum (Blue mold rot fungus), this protein is Isoepoxydon dehydrogenase patN.